Consider the following 433-residue polypeptide: Chaperone SurA (433 aa).

An N-terminal signal peptide occupies residues 1 to 24 (MKYRIKALLLASSLIITTITSVQA). PpiC domains follow at residues 175 to 276 (NVEY…KVLD) and 285 to 384 (VEEV…KLED).

The protein resides in the periplasm. The enzyme catalyses [protein]-peptidylproline (omega=180) = [protein]-peptidylproline (omega=0). Its function is as follows. Chaperone involved in the correct folding and assembly of outer membrane proteins. Recognizes specific patterns of aromatic residues and the orientation of their side chains, which are found more frequently in integral outer membrane proteins. May act in both early periplasmic and late outer membrane-associated steps of protein maturation. This chain is Chaperone SurA, found in Colwellia psychrerythraea (strain 34H / ATCC BAA-681) (Vibrio psychroerythus).